Consider the following 223-residue polypeptide: DnaJ homolog subfamily B member 9 (223 aa).

Residues 1 to 23 form the signal peptide; it reads MATPQSIFIFAICILMITELILA. In terms of domain architecture, J spans 26-90; it reads SYYDILGVPK…NRRKEYDTLG (65 aa). The segment at 91 to 223 is divergent targeting domain; the sequence is HSAFTNGKGQ…VTTYTDCSGQ (133 aa). Ser133 carries the post-translational modification Phosphoserine.

Interacts with HSPA5/BiP; interaction is direct. Interacts with ERN1/IRE1 (via the luminal region). Interacts with DERL1.

The protein resides in the endoplasmic reticulum lumen. Its function is as follows. Co-chaperone for Hsp70 protein HSPA5/BiP that acts as a key repressor of the ERN1/IRE1-mediated unfolded protein response (UPR). J domain-containing co-chaperones stimulate the ATPase activity of Hsp70 proteins and are required for efficient substrate recognition by Hsp70 proteins. In the unstressed endoplasmic reticulum, interacts with the luminal region of ERN1/IRE1 and selectively recruits HSPA5/BiP: HSPA5/BiP disrupts the dimerization of the active ERN1/IRE1 luminal region, thereby inactivating ERN1/IRE1. Also involved in endoplasmic reticulum-associated degradation (ERAD) of misfolded proteins. Required for survival of B-cell progenitors and normal antibody production. This Pongo abelii (Sumatran orangutan) protein is DnaJ homolog subfamily B member 9.